Consider the following 148-residue polypeptide: Lysozyme C (148 aa).

The first 18 residues, 1–18 (MKAVIILGLVLLSVTVQG), serve as a signal peptide directing secretion. The region spanning 19 to 148 (KIFERCELAR…VSQYVQGCGV (130 aa)) is the C-type lysozyme domain. 4 cysteine pairs are disulfide-bonded: C24/C146, C48/C134, C83/C99, and C95/C113. Catalysis depends on residues E53 and D71.

It belongs to the glycosyl hydrolase 22 family. Monomer.

It localises to the secreted. The enzyme catalyses Hydrolysis of (1-&gt;4)-beta-linkages between N-acetylmuramic acid and N-acetyl-D-glucosamine residues in a peptidoglycan and between N-acetyl-D-glucosamine residues in chitodextrins.. Its function is as follows. Lysozymes have primarily a bacteriolytic function; those in tissues and body fluids are associated with the monocyte-macrophage system and enhance the activity of immunoagents. In Macaca mulatta (Rhesus macaque), this protein is Lysozyme C (LYZ).